The sequence spans 638 residues: Bromodomain-containing factor 2 (638 aa).

Residues 1-10 show a composition bias toward basic and acidic residues; sequence MSRTNMDTRH. The disordered stretch occupies residues 1–54; that stretch reads MSRTNMDTRHAHSALLAAPQSATANSRSSNSSSESSSNKNNINVGVGDDSGNVS. A compositionally biased stretch (low complexity) spans 25 to 43; sequence NSRSSNSSSESSSNKNNIN. Residues 130–239 form the Bromo 1 domain; it reads EAEELPPHQS…KYFEKKLSAM (110 aa). The disordered stretch occupies residues 250-306; that stretch reads KKTSRNRKKNEDMDSPLVIRRSVSTTNDNIGESGNREGVSGGRPKRTIHPPKSKDLF. Serine 264 carries the phosphoserine modification. A compositionally biased stretch (polar residues) spans 271–281; sequence SVSTTNDNIGE. One can recognise a Bromo 2 domain in the interval 317–426; that stretch reads KTLQKKFRTC…ELFNFHWLEN (110 aa). The disordered stretch occupies residues 435 to 460; that stretch reads TDSDLEEDNYSSSYSSDDEYDDEDIN. Residues 450-460 show a composition bias toward acidic residues; that stretch reads SDDEYDDEDIN. The stretch at 468 to 537 forms a coiled coil; the sequence is AIQYLEQKLK…INELSDLEMN (70 aa). The region spanning 506 to 590 is the NET domain; it reads TLLRRKAMKH…EKKNNNNSKR (85 aa). The interval 586–638 is disordered; sequence NNSKRKLSGNYSTAPTNKKKKTLKFLEKDEIINNNNYSDSEEDSSDSSDSDSD. Over residues 624-638 the composition is skewed to acidic residues; it reads DSEEDSSDSSDSDSD.

This sequence belongs to the BET family. Interacts with the TFIID subunit TAF7 and with histone H4. In terms of processing, phosphorylated by the casein kinase CK2 complex.

Its subcellular location is the cytoplasm. The protein localises to the nucleus. Functionally, transcription factor involved in the expression of a broad class of genes including snRNAs. Required for sporulation and DNA-damage repair. Prevents the spreading of SIR silencing at telomeres and protects histone H4, but not H3, from deacetylation. The chain is Bromodomain-containing factor 2 (BDF2) from Saccharomyces cerevisiae (strain ATCC 204508 / S288c) (Baker's yeast).